We begin with the raw amino-acid sequence, 133 residues long: Ribonuclease P protein component (133 aa).

It belongs to the RnpA family. In terms of assembly, consists of a catalytic RNA component (M1 or rnpB) and a protein subunit.

It catalyses the reaction Endonucleolytic cleavage of RNA, removing 5'-extranucleotides from tRNA precursor.. RNaseP catalyzes the removal of the 5'-leader sequence from pre-tRNA to produce the mature 5'-terminus. It can also cleave other RNA substrates such as 4.5S RNA. The protein component plays an auxiliary but essential role in vivo by binding to the 5'-leader sequence and broadening the substrate specificity of the ribozyme. This Corynebacterium glutamicum (strain R) protein is Ribonuclease P protein component.